The following is a 182-amino-acid chain: Transcription termination/antitermination protein NusG (182 aa).

A KOW domain is found at 131 to 161; it reads GEVVRVNEGPFADFNGTVEEVDYEKSRLKVS.

It belongs to the NusG family.

In terms of biological role, participates in transcription elongation, termination and antitermination. The protein is Transcription termination/antitermination protein NusG of Vibrio parahaemolyticus serotype O3:K6 (strain RIMD 2210633).